The chain runs to 178 residues: DNA-directed RNA polymerase V subunit 7 (178 aa).

This sequence belongs to the eukaryotic RPB7/RPC8 RNA polymerase subunit family. In terms of assembly, component of the RNA polymerase V complex.

It is found in the nucleus. DNA-dependent RNA polymerase catalyzes the transcription of DNA into RNA using the four ribonucleoside triphosphates as substrates. Component of RNA polymerase V involved in RNA-directed DNA methylation-dependent (RdDM) silencing of endogenous repeated sequences, including transposable elements. The chain is DNA-directed RNA polymerase V subunit 7 (NRPE7) from Arabidopsis thaliana (Mouse-ear cress).